The primary structure comprises 783 residues: Polyribonucleotide nucleotidyltransferase 1, mitochondrial (783 aa).

A mitochondrion-targeting transit peptide spans 1-46 (MAACRYCCSCLRLRPLSDGPFCLPGRDRALTQLLVRALWSSTGSRA). 4 positions are modified to N6-acetyllysine: Lys250, Lys264, Lys285, and Lys289. N6-succinyllysine is present on Lys552. A KH domain is found at 605-664 (PVVETVQVPLSKRAKFVGPGGYNLKKLQAETGVTISQVDEETFSVFAPTPSALHEARDFI). The S1 motif domain maps to 679-750 (GAVYTATITE…ADGRMRLSRK (72 aa)). Phosphoserine occurs at positions 754 and 782.

The protein belongs to the polyribonucleotide nucleotidyltransferase family. Homotrimer; in free form. Homooligomer. Component of the mitochondrial degradosome (mtEXO) complex which is a heteropentamer containing 2 copies of SUPV3L1 and 3 copies of PNPT1. As part of the mitochondrial degradosome complex, interacts with GRSF1 in an RNA-dependent manner; the interaction enhances the activity of the complex. Interacts with TCL1A; the interaction has no effect on PNPT1 exonuclease activity.

The protein localises to the cytoplasm. It localises to the mitochondrion matrix. It is found in the mitochondrion intermembrane space. It catalyses the reaction RNA(n+1) + phosphate = RNA(n) + a ribonucleoside 5'-diphosphate. Its function is as follows. RNA-binding protein implicated in numerous RNA metabolic processes. Catalyzes the phosphorolysis of single-stranded polyribonucleotides processively in the 3'-to-5' direction. Mitochondrial intermembrane factor with RNA-processing exoribonulease activity. Component of the mitochondrial degradosome (mtEXO) complex, that degrades 3' overhang double-stranded RNA with a 3'-to-5' directionality in an ATP-dependent manner. Involved in the degradation of non-coding mitochondrial transcripts (MT-ncRNA) and tRNA-like molecules. Required for correct processing and polyadenylation of mitochondrial mRNAs. Plays a role as a cytoplasmic RNA import factor that mediates the translocation of small RNA components like the 5S RNA, the RNA subunit of ribonuclease P and the mitochondrial RNA-processing (MRP) RNA, into the mitochondrial matrix. Plays a role in mitochondrial morphogenesis and respiration; regulates the expression of the electron transport chain (ETC) components at the mRNA and protein levels. In the cytoplasm, shows a 3'-to-5' exoribonuclease mediating mRNA degradation activity; degrades c-myc mRNA upon treatment with IFNB1/IFN-beta, resulting in a growth arrest in melanoma cells. Regulates the stability of specific mature miRNAs in melanoma cells; specifically and selectively degrades miR-221, preferentially. Also plays a role in RNA cell surveillance by cleaning up oxidized RNAs. Binds to the RNA subunit of ribonuclease P, MRP RNA and miR-221 microRNA. The polypeptide is Polyribonucleotide nucleotidyltransferase 1, mitochondrial (PNPT1) (Pongo abelii (Sumatran orangutan)).